Consider the following 657-residue polypeptide: Threonine--tRNA ligase (657 aa).

In terms of domain architecture, TGS spans 1–61; that stretch reads MINVTLPDGS…EGDASVAIIT (61 aa). Positions 244–549 are catalytic; the sequence is DHRKLGAQLD…LIENYAGSFP (306 aa). Zn(2+)-binding residues include Cys349, His400, and His526.

This sequence belongs to the class-II aminoacyl-tRNA synthetase family. As to quaternary structure, homodimer. It depends on Zn(2+) as a cofactor.

It is found in the cytoplasm. The catalysed reaction is tRNA(Thr) + L-threonine + ATP = L-threonyl-tRNA(Thr) + AMP + diphosphate + H(+). Functionally, catalyzes the attachment of threonine to tRNA(Thr) in a two-step reaction: L-threonine is first activated by ATP to form Thr-AMP and then transferred to the acceptor end of tRNA(Thr). Also edits incorrectly charged L-seryl-tRNA(Thr). This is Threonine--tRNA ligase from Hyphomonas neptunium (strain ATCC 15444).